The sequence spans 114 residues: Probable non-functional T cell receptor beta variable 6-7 (114 aa).

Positions 1–21 are cleaved as a signal peptide; the sequence is MSLGLLCCVAFSLLWAGPMNA. An Ig-like domain is found at 22 to 114; sequence GVTQTPKFHV…TSVYFCASSY (93 aa). Cysteines 42 and 110 form a disulfide. Asn-84 carries an N-linked (GlcNAc...) asparagine glycan.

Alpha-beta TR is a heterodimer composed of an alpha and beta chain; disulfide-linked. The alpha-beta TR is associated with the transmembrane signaling CD3 coreceptor proteins to form the TR-CD3 (TcR or TCR). The assembly of alpha-beta TR heterodimers with CD3 occurs in the endoplasmic reticulum where a single alpha-beta TR heterodimer associates with one CD3D-CD3E heterodimer, one CD3G-CD3E heterodimer and one CD247 homodimer forming a stable octameric structure. CD3D-CD3E and CD3G-CD3E heterodimers preferentially associate with TR alpha and TR beta chains, respectively. The association of the CD247 homodimer is the last step of TcR assembly in the endoplasmic reticulum and is required for transport to the cell surface.

It localises to the cell membrane. In terms of biological role, probable non-functional open reading frame (ORF) of V region of the variable domain of T cell receptor (TR) beta chain. Non-functional ORF generally cannot participate in the synthesis of a productive T cell receptor (TR) chain due to altered V-(D)-J or switch recombination and/or splicing site (at mRNA level) and/or conserved amino acid change (protein level). Alpha-beta T cell receptors are antigen specific receptors which are essential to the immune response and are present on the cell surface of T lymphocytes. Recognize peptide-major histocompatibility (MH) (pMH) complexes that are displayed by antigen presenting cells (APC), a prerequisite for efficient T cell adaptive immunity against pathogens. Binding of alpha-beta TR to pMH complex initiates TR-CD3 clustering on the cell surface and intracellular activation of LCK that phosphorylates the ITAM motifs of CD3G, CD3D, CD3E and CD247 enabling the recruitment of ZAP70. In turn ZAP70 phosphorylates LAT, which recruits numerous signaling molecules to form the LAT signalosome. The LAT signalosome propagates signal branching to three major signaling pathways, the calcium, the mitogen-activated protein kinase (MAPK) kinase and the nuclear factor NF-kappa-B (NF-kB) pathways, leading to the mobilization of transcription factors that are critical for gene expression and essential for T cell growth and differentiation. The T cell repertoire is generated in the thymus, by V-(D)-J rearrangement. This repertoire is then shaped by intrathymic selection events to generate a peripheral T cell pool of self-MH restricted, non-autoaggressive T cells. Post-thymic interaction of alpha-beta TR with the pMH complexes shapes TR structural and functional avidity. The protein is Probable non-functional T cell receptor beta variable 6-7 of Homo sapiens (Human).